We begin with the raw amino-acid sequence, 102 residues long: Small ribosomal subunit protein uS10 (102 aa).

It belongs to the universal ribosomal protein uS10 family. Part of the 30S ribosomal subunit.

Involved in the binding of tRNA to the ribosomes. The protein is Small ribosomal subunit protein uS10 of Thermobifida fusca (strain YX).